The primary structure comprises 24 residues: Bombinin (24 aa).

Residue Asn-24 is modified to Asparagine amide.

The protein belongs to the bombinin family. As to expression, expressed by the skin glands.

The protein localises to the secreted. Has antimicrobial and hemolytic activities. In Bombina variegata (Yellow-bellied toad), this protein is Bombinin.